Here is an 855-residue protein sequence, read N- to C-terminus: Leucine--tRNA ligase (855 aa).

The 'HIGH' region motif lies at 45–55 (PYPSGRLHMGH). The 'KMSKS' region signature appears at 619–623 (KMSKS). Residue Lys622 participates in ATP binding.

It belongs to the class-I aminoacyl-tRNA synthetase family.

The protein localises to the cytoplasm. The catalysed reaction is tRNA(Leu) + L-leucine + ATP = L-leucyl-tRNA(Leu) + AMP + diphosphate. This is Leucine--tRNA ligase from Hyphomonas neptunium (strain ATCC 15444).